Reading from the N-terminus, the 574-residue chain is Glutamate--tRNA ligase (574 aa).

Positions 109–119 (PNPDFVIHMGN) match the 'HIGH' region motif.

Belongs to the class-I aminoacyl-tRNA synthetase family. Glutamate--tRNA ligase type 2 subfamily.

It localises to the cytoplasm. It carries out the reaction tRNA(Glu) + L-glutamate + ATP = L-glutamyl-tRNA(Glu) + AMP + diphosphate. Catalyzes the attachment of glutamate to tRNA(Glu) in a two-step reaction: glutamate is first activated by ATP to form Glu-AMP and then transferred to the acceptor end of tRNA(Glu). The sequence is that of Glutamate--tRNA ligase from Aeropyrum pernix (strain ATCC 700893 / DSM 11879 / JCM 9820 / NBRC 100138 / K1).